Here is a 73-residue protein sequence, read N- to C-terminus: Translation initiation factor IF-1 1 (73 aa).

The S1-like domain occupies 1-72; sequence MAKEELIEFG…TKGRINFRHK (72 aa).

The protein belongs to the IF-1 family. As to quaternary structure, component of the 30S ribosomal translation pre-initiation complex which assembles on the 30S ribosome in the order IF-2 and IF-3, IF-1 and N-formylmethionyl-tRNA(fMet); mRNA recruitment can occur at any time during PIC assembly.

It is found in the cytoplasm. Its function is as follows. One of the essential components for the initiation of protein synthesis. Stabilizes the binding of IF-2 and IF-3 on the 30S subunit to which N-formylmethionyl-tRNA(fMet) subsequently binds. Helps modulate mRNA selection, yielding the 30S pre-initiation complex (PIC). Upon addition of the 50S ribosomal subunit IF-1, IF-2 and IF-3 are released leaving the mature 70S translation initiation complex. In Cupriavidus metallidurans (strain ATCC 43123 / DSM 2839 / NBRC 102507 / CH34) (Ralstonia metallidurans), this protein is Translation initiation factor IF-1 1.